Reading from the N-terminus, the 66-residue chain is MKLMWLLFLCVLAFSIAQIYISDPCAGGVHRCYEPCEKKKCRLPHKCINGRCTCYVGRNVCAISSH.

The first 17 residues, 1 to 17 (MKLMWLLFLCVLAFSIA), serve as a signal peptide directing secretion.

This sequence belongs to the short scorpion toxin superfamily. Potassium channel inhibitor family. Alpha-KTx 27 subfamily. Post-translationally, contains 4 disulfide bonds. In terms of tissue distribution, expressed by the venom gland.

It localises to the secreted. This is Potassium channel toxin alpha-KTx 27.3 from Lychas mucronatus (Chinese swimming scorpion).